A 581-amino-acid polypeptide reads, in one-letter code: Arginine--tRNA ligase (581 aa).

The 'HIGH' region signature appears at 126-136 (PNLAKEMHVGH).

It belongs to the class-I aminoacyl-tRNA synthetase family. In terms of assembly, monomer.

It is found in the cytoplasm. The catalysed reaction is tRNA(Arg) + L-arginine + ATP = L-arginyl-tRNA(Arg) + AMP + diphosphate. The polypeptide is Arginine--tRNA ligase (Shewanella baltica (strain OS155 / ATCC BAA-1091)).